Reading from the N-terminus, the 826-residue chain is Putative pentatricopeptide repeat-containing protein At1g13630 (826 aa).

PPR repeat units lie at residues 228-262 (NEHT…DIGP), 263-297 (SVVS…GLVP), 298-332 (SVYS…GVEP), 333-367 (DSVT…GLSP), 368-402 (DVIT…GFEL), 404-438 (SIIP…GLSP), 439-473 (DLVA…RILP), 474-508 (NSRT…GETL), 509-543 (DIVL…GITP), 544-578 (SVAT…GLAP), 579-613 (SVVS…GIPP), 614-648 (TNVT…KCKQ), 661-695 (DQIT…NLDA), 696-730 (SSAT…NVSL), 731-765 (SKFA…GFNV), and 766-800 (SIRD…GISP).

It belongs to the PPR family. P subfamily.

In Arabidopsis thaliana (Mouse-ear cress), this protein is Putative pentatricopeptide repeat-containing protein At1g13630.